A 413-amino-acid chain; its full sequence is Serine/threonine-protein kinase SSN3 (413 aa).

The Protein kinase domain maps to 26–355 (YHIVGFISSG…AQEALEHPYF (330 aa)). Residues 32-40 (ISSGTYGRV) and Lys56 each bind ATP. The Proton acceptor role is filled by Asp158. The segment covering 376–385 (RRVTQDDNDI) has biased composition (basic and acidic residues). The interval 376–413 (RRVTQDDNDIRSGSLPGTKRSGLPDDSLMGRASKRLKE) is disordered.

It belongs to the protein kinase superfamily. CMGC Ser/Thr protein kinase family. CDC2/CDKX subfamily. In terms of assembly, component of the srb8-11 complex, a regulatory module of the Mediator complex. Mg(2+) is required as a cofactor.

The protein localises to the nucleus. It catalyses the reaction L-seryl-[protein] + ATP = O-phospho-L-seryl-[protein] + ADP + H(+). It carries out the reaction L-threonyl-[protein] + ATP = O-phospho-L-threonyl-[protein] + ADP + H(+). The catalysed reaction is [DNA-directed RNA polymerase] + ATP = phospho-[DNA-directed RNA polymerase] + ADP + H(+). Functionally, component of the srb8-11 complex. The srb8-11 complex is a regulatory module of the Mediator complex which is itself involved in regulation of basal and activated RNA polymerase II-dependent transcription. The srb8-11 complex may be involved in the transcriptional repression of a subset of genes regulated by Mediator. It may inhibit the association of the Mediator complex with RNA polymerase II to form the holoenzyme complex. The srb8-11 complex phosphorylates the C-terminal domain (CTD) of the largest subunit of RNA polymerase II. This chain is Serine/threonine-protein kinase SSN3 (ssn3), found in Aspergillus oryzae (strain ATCC 42149 / RIB 40) (Yellow koji mold).